Reading from the N-terminus, the 499-residue chain is Aspartyl/glutamyl-tRNA(Asn/Gln) amidotransferase subunit B (499 aa).

This sequence belongs to the GatB/GatE family. GatB subfamily. Heterotrimer of A, B and C subunits.

It carries out the reaction L-glutamyl-tRNA(Gln) + L-glutamine + ATP + H2O = L-glutaminyl-tRNA(Gln) + L-glutamate + ADP + phosphate + H(+). The catalysed reaction is L-aspartyl-tRNA(Asn) + L-glutamine + ATP + H2O = L-asparaginyl-tRNA(Asn) + L-glutamate + ADP + phosphate + 2 H(+). Allows the formation of correctly charged Asn-tRNA(Asn) or Gln-tRNA(Gln) through the transamidation of misacylated Asp-tRNA(Asn) or Glu-tRNA(Gln) in organisms which lack either or both of asparaginyl-tRNA or glutaminyl-tRNA synthetases. The reaction takes place in the presence of glutamine and ATP through an activated phospho-Asp-tRNA(Asn) or phospho-Glu-tRNA(Gln). The polypeptide is Aspartyl/glutamyl-tRNA(Asn/Gln) amidotransferase subunit B (Leifsonia xyli subsp. xyli (strain CTCB07)).